Reading from the N-terminus, the 66-residue chain is Large ribosomal subunit protein uL29 (66 aa).

The protein belongs to the universal ribosomal protein uL29 family.

This Rhizobium johnstonii (strain DSM 114642 / LMG 32736 / 3841) (Rhizobium leguminosarum bv. viciae) protein is Large ribosomal subunit protein uL29.